A 164-amino-acid polypeptide reads, in one-letter code: Small ribosomal subunit protein uS5 (164 aa).

Residues 10 to 73 (IEERVVAINR…ESAKKNMIEV (64 aa)) enclose the S5 DRBM domain.

This sequence belongs to the universal ribosomal protein uS5 family. Part of the 30S ribosomal subunit. Contacts proteins S4 and S8.

Its function is as follows. With S4 and S12 plays an important role in translational accuracy. Located at the back of the 30S subunit body where it stabilizes the conformation of the head with respect to the body. The chain is Small ribosomal subunit protein uS5 from Streptococcus suis (strain 98HAH33).